The following is a 289-amino-acid chain: Glycerol facilitator-aquaporin gla (289 aa).

2 consecutive transmembrane segments (helical) span residues 10–30 (ITEFVGTALLIIMGNGAVANV) and 41–61 (SWMIIGWGYGLGVMLPAVAFG). The NPA 1 motif lies at 68-70 (NPA). 3 helical membrane-spanning segments follow: residues 87 to 107 (AQYIIAQVLGAMFGQLLIVMV), 151 to 171 (FLGSFVLFFGAVAATNIFFGS), and 209 to 229 (MIAHLFLGFLVMGLVVALGGP). An NPA 2 motif is present at residues 235-237 (NPA). The helical transmembrane segment at 264-284 (WYAWVPVLAPILASLAAVALF) threads the bilayer.

This sequence belongs to the MIP/aquaporin (TC 1.A.8) family.

The protein resides in the cell membrane. Functionally, mixed channel protein that transports both water and glycerol. The polypeptide is Glycerol facilitator-aquaporin gla (gla) (Lactococcus lactis subsp. cremoris (Streptococcus cremoris)).